The primary structure comprises 160 residues: CXXC motif containing zinc binding protein (160 aa).

Positions 33, 36, 67, and 70 each coordinate Zn(2+). S75 bears the Phosphoserine mark.

Belongs to the UPF0587 family. Monomer.

The chain is CXXC motif containing zinc binding protein (CZIB) from Bos taurus (Bovine).